We begin with the raw amino-acid sequence, 590 residues long: Arginine--tRNA ligase (590 aa).

The short motif at 134 to 144 (ANPTGPMHVGH) is the 'HIGH' region element.

The protein belongs to the class-I aminoacyl-tRNA synthetase family. Monomer.

It is found in the cytoplasm. It catalyses the reaction tRNA(Arg) + L-arginine + ATP = L-arginyl-tRNA(Arg) + AMP + diphosphate. The sequence is that of Arginine--tRNA ligase from Beijerinckia indica subsp. indica (strain ATCC 9039 / DSM 1715 / NCIMB 8712).